The following is an 837-amino-acid chain: A disintegrin and metalloproteinase with thrombospondin motifs 4 (837 aa).

A signal peptide spans 1–51 (MSQTGSHPGRGLAGRWLWGAQPCLLLPIVPLSWLVWLLLLLLASLLPSARL). Residues 52–212 (ASPLPREEEI…PSPRPRRAKR (161 aa)) constitute a propeptide that is removed on maturation. The N-linked (GlcNAc...) asparagine glycan is linked to N68. Positions 166-191 (EGGTPNSAGGPGAHILRRKSPASGQG) are disordered. A Cysteine switch motif is present at residues 192–199 (PMCNVKAP). Zn(2+) is bound at residue C194. A Peptidase M12B domain is found at 218–428 (RFVETLVVAD…GYGHCLLDKP (211 aa)). 11 disulfides stabilise this stretch: C293/C345, C322/C327, C339/C423, C377/C407, C449/C472, C460/C482, C467/C501, C495/C506, C532/C569, C536/C574, and C547/C559. H361 serves as a coordination point for Zn(2+). E362 is a catalytic residue. Zn(2+) contacts are provided by H365 and H371. A Disintegrin domain is found at 437–519 (TFPGKDYDAD…DQLQDFNIPQ (83 aa)). The TSP type-1 domain maps to 520-575 (AGGWGPWGPWGDCSRTCGGGVQFSSRDCTRPVPRNGGKYCEGRRTRFRSCNTEDCP). Positions 686–837 (SKQSGSFRKF…LRRRPWVGRK (152 aa)) are spacer.

Interacts with SRPX2. The cofactor is Zn(2+). Post-translationally, the precursor is cleaved by a furin endopeptidase. In terms of processing, glycosylated. Can be O-fucosylated by POFUT2 on a serine or a threonine residue found within the consensus sequence C1-X(2)-(S/T)-C2-G of the TSP type-1 repeat domains where C1 and C2 are the first and second cysteine residue of the repeat, respectively. Fucosylated repeats can then be further glycosylated by the addition of a beta-1,3-glucose residue by the glucosyltransferase, B3GALTL. Fucosylation mediates the efficient secretion of ADAMTS family members. Can also be C-glycosylated with one or two mannose molecules on tryptophan residues within the consensus sequence W-X-X-W of the TPRs, and N-glycosylated. These other glycosylations can also facilitate secretion.

It localises to the secreted. The protein resides in the extracellular space. It is found in the extracellular matrix. It carries out the reaction Glutamyl endopeptidase. Bonds cleaved include 370-Thr-Glu-Gly-Glu-|-Ala-Arg-Gly-Ser-377 in the interglobular domain of mammalian aggrecan.. In terms of biological role, cleaves aggrecan, a cartilage proteoglycan, at the '392-Glu-|-Ala-393' site and may be involved in its turnover. Also cleaves COMP. May play an important role in the destruction of aggrecan in arthritic diseases. In Pongo abelii (Sumatran orangutan), this protein is A disintegrin and metalloproteinase with thrombospondin motifs 4 (ADAMTS4).